A 355-amino-acid polypeptide reads, in one-letter code: Guanine nucleotide-binding protein G(z) subunit alpha (355 aa).

Residues 1-14 (MGCRQSSEEKEAAR) show a composition bias toward basic and acidic residues. The disordered stretch occupies residues 1-26 (MGCRQSSEEKEAARRSRRIDRHLRSE). The N-myristoyl glycine moiety is linked to residue Gly-2. Cys-3 carries S-palmitoyl cysteine lipidation. Positions 32–355 (REIKLLLLGT…QNNLKYIGLC (324 aa)) constitute a G-alpha domain. The G1 motif stretch occupies residues 35 to 48 (KLLLLGTSNSGKST). Residues 40-47 (GTSNSGKS), 176-182 (LRSRDMT), 201-205 (DVGGQ), 270-273 (NKKD), and Ala-327 contribute to the GTP site. Ser-47 contributes to the Mg(2+) binding site. The G2 motif stretch occupies residues 174–182 (DILRSRDMT). At Arg-179 the chain carries ADP-ribosylarginine; by cholera toxin. Thr-182 contacts Mg(2+). The segment at 197 to 206 (FKMVDVGGQR) is G3 motif. The tract at residues 266 to 273 (ILFLNKKD) is G4 motif. Residues 325–330 (TCATDT) form a G5 motif region.

Belongs to the G-alpha family. G(i/o/t/z) subfamily. In terms of assembly, G-proteins are composed of 3 units; alpha, beta and gamma. The alpha chain contains the guanine nucleotide binding site. Interacts with ADGRB2.

It localises to the membrane. Functionally, guanine nucleotide-binding proteins (G proteins) are involved as modulators or transducers in various transmembrane signaling systems. The chain is Guanine nucleotide-binding protein G(z) subunit alpha (GNAZ) from Homo sapiens (Human).